Reading from the N-terminus, the 146-residue chain is Prefoldin subunit alpha (146 aa).

This sequence belongs to the prefoldin alpha subunit family. Heterohexamer of two alpha and four beta subunits.

It is found in the cytoplasm. Functionally, molecular chaperone capable of stabilizing a range of proteins. Seems to fulfill an ATP-independent, HSP70-like function in archaeal de novo protein folding. The polypeptide is Prefoldin subunit alpha (Methanococcus vannielii (strain ATCC 35089 / DSM 1224 / JCM 13029 / OCM 148 / SB)).